The chain runs to 400 residues: Subtilisin-like protease 11 (400 aa).

Positions 1 to 19 are cleaved as a signal peptide; it reads MGLFTVVFTAIAALSAVDA. A propeptide spanning residues 20–117 is cleaved from the precursor; it reads AELLRSPNSK…VEHDRYVYID (98 aa). The region spanning 35-116 is the Inhibitor I9 domain; the sequence is SYLVVMKDSV…FVEHDRYVYI (82 aa). One can recognise a Peptidase S8 domain in the interval 127-400; that stretch reads SWGLGRVSHR…NKLLYNGSGQ (274 aa). A glycan (N-linked (GlcNAc...) asparagine) is linked at Asn138. Residues Asp159 and His191 each act as charge relay system in the active site. N-linked (GlcNAc...) asparagine glycans are attached at residues Asn252, Asn336, and Asn337. Catalysis depends on Ser346, which acts as the Charge relay system. N-linked (GlcNAc...) asparagine glycans are attached at residues Asn388 and Asn396.

The protein belongs to the peptidase S8 family.

It localises to the secreted. Functionally, secreted subtilisin-like serine protease with keratinolytic activity that contributes to pathogenicity. This is Subtilisin-like protease 11 (SUB11) from Arthroderma gypseum (strain ATCC MYA-4604 / CBS 118893) (Microsporum gypseum).